An 84-amino-acid chain; its full sequence is Acyl carrier protein (84 aa).

In terms of domain architecture, Carrier spans 4–79 (NEIFEKVQDI…EVVDFIKSKL (76 aa)). O-(pantetheine 4'-phosphoryl)serine is present on serine 39.

This sequence belongs to the acyl carrier protein (ACP) family. Post-translationally, 4'-phosphopantetheine is transferred from CoA to a specific serine of apo-ACP by AcpS. This modification is essential for activity because fatty acids are bound in thioester linkage to the sulfhydryl of the prosthetic group.

It localises to the plastid. The protein localises to the chloroplast. It functions in the pathway lipid metabolism; fatty acid biosynthesis. Its function is as follows. Carrier of the growing fatty acid chain in fatty acid biosynthesis. This is Acyl carrier protein from Porphyra purpurea (Red seaweed).